The primary structure comprises 189 residues: dCTP deaminase (189 aa).

DCTP is bound by residues 112 to 117, 136 to 138, Gln-157, Tyr-171, and Gln-181; these read KSTYAR and TLE. Residue Glu-138 is the Proton donor/acceptor of the active site.

Belongs to the dCTP deaminase family. In terms of assembly, homotrimer.

The catalysed reaction is dCTP + H2O + H(+) = dUTP + NH4(+). The protein operates within pyrimidine metabolism; dUMP biosynthesis; dUMP from dCTP (dUTP route): step 1/2. In terms of biological role, catalyzes the deamination of dCTP to dUTP. The sequence is that of dCTP deaminase from Paraburkholderia xenovorans (strain LB400).